The sequence spans 60 residues: Large ribosomal subunit protein bL32 (60 aa).

The interval 1–23 is disordered; the sequence is MAVPRNRHSNARKNIRRSHHAKK.

It belongs to the bacterial ribosomal protein bL32 family.

This Chlamydia caviae (strain ATCC VR-813 / DSM 19441 / 03DC25 / GPIC) (Chlamydophila caviae) protein is Large ribosomal subunit protein bL32.